Reading from the N-terminus, the 425-residue chain is Serine--tRNA ligase (425 aa).

Residue 231–233 coordinates L-serine; sequence TAE. 262 to 264 lines the ATP pocket; it reads RSE. Glu285 contributes to the L-serine binding site. ATP is bound at residue 349 to 352; that stretch reads EISS. Ser385 is a binding site for L-serine.

It belongs to the class-II aminoacyl-tRNA synthetase family. Type-1 seryl-tRNA synthetase subfamily. In terms of assembly, homodimer. The tRNA molecule binds across the dimer.

Its subcellular location is the cytoplasm. It catalyses the reaction tRNA(Ser) + L-serine + ATP = L-seryl-tRNA(Ser) + AMP + diphosphate + H(+). It carries out the reaction tRNA(Sec) + L-serine + ATP = L-seryl-tRNA(Sec) + AMP + diphosphate + H(+). It functions in the pathway aminoacyl-tRNA biosynthesis; selenocysteinyl-tRNA(Sec) biosynthesis; L-seryl-tRNA(Sec) from L-serine and tRNA(Sec): step 1/1. Catalyzes the attachment of serine to tRNA(Ser). Is also able to aminoacylate tRNA(Sec) with serine, to form the misacylated tRNA L-seryl-tRNA(Sec), which will be further converted into selenocysteinyl-tRNA(Sec). In Bartonella henselae (strain ATCC 49882 / DSM 28221 / CCUG 30454 / Houston 1) (Rochalimaea henselae), this protein is Serine--tRNA ligase.